We begin with the raw amino-acid sequence, 1351 residues long: Alpha-latrotoxin-Lh1a (1351 aa).

The signal sequence occupies residues 1–7 (SLVRMRR). Residues 4 to 7 (RMRR) are furin-like endopeptidase recognition region. The segment at 226–245 (VLYALLYGTQTYVSVMFFLL) is helix H8 is the probable transmembrane region of the tetrameric pore inserted in the target cell membrane. Cys401 and Cys1054 are disulfide-bonded. 22 ANK repeats span residues 446 to 477 (LYNT…ATFE), 478 to 509 (QGRT…ELNQ), 513 to 542 (KGYT…SINS), 547 to 577 (FLQT…NINE), 581 to 610 (DGFT…DLNA), 614 to 644 (KGLT…DVNA), 648 to 678 (NNMT…NADV), 683 to 711 (GLLS…NVNV), 717 to 746 (GGIT…NIEQ), 750 to 779 (EKYT…NFEA), 783 to 812 (SGAT…NWRD), 816 to 846 (NGQM…VLDI), 850 to 879 (NSDT…DINT), 883 to 912 (TGHA…NVYI), 916 to 945 (DGIN…KFEW), 959 to 991 (EECA…GNFA), 992 to 1019 (ICGP…DLNV), 1023 to 1052 (KPDT…KVNH), 1056 to 1085 (NGMT…DFRR), 1089 to 1119 (LGAT…DIDI), 1125 to 1154 (DKET…DMTI), and 1158 to 1187 (YDKT…KFRR). A furin-like endopeptidase recognition region region spans residues 1184-1187 (KFRR). Residues 1188-1351 (EYKSSYGEHS…LGSVIMNSHS (164 aa)) constitute a propeptide that is removed on maturation.

The protein belongs to the cationic peptide 01 (latrotoxin) family. 03 (alpha-latrotoxin) subfamily. Homotetramer in membranes. In terms of processing, processed by furin-like proteases at both the N- and C-termini. In terms of tissue distribution, expressed in venom gland, cephalothorax, and abdomen tissues from both males and females.

Its subcellular location is the secreted. The protein resides in the target cell membrane. Functionally, presynaptic neurotoxin that causes massive release of neurotransmitters from vertebrate (but not invertebrate) nerve terminals and endocrine cells via a complex mechanism involving activation of receptor(s) and toxin insertion into the plasma membrane with subsequent pore formation. Binds to neurexin-1-alpha (NRXN1) in a calcium dependent manner, adhesion G protein-coupled receptor L1 (ADGRL1, also termed latrophilin-1 and calcium-independent receptor of latrotoxin (CIRL)), and receptor-type tyrosine-protein phosphatase S (PTPRS), also termed PTP sigma. NRXN1 and PTPRS are suggested to provide a platform for binding and subsequent pore formation events. In contrast, binding to ADGRL1 does not involve oligomerization and channel formation, but direct downstream stimulation of the synaptic fusion machinery. Induces rapid muscle contracture and loss of twitch tension when added to the isolated and indirectly stimulated chick biventer cervicis nerve-muscle preparation. This is Alpha-latrotoxin-Lh1a from Latrodectus hasselti (Redback spider).